Here is a 348-residue protein sequence, read N- to C-terminus: Trans-L-3-hydroxyproline dehydratase (348 aa).

Cys101 serves as the catalytic Proton acceptor. Substrate-binding positions include 102–103 (GH), Asp263, and 268–269 (GS).

Belongs to the proline racemase family. In terms of assembly, homodimer.

The enzyme catalyses trans-3-hydroxy-L-proline = 1-pyrroline-2-carboxylate + H2O. In terms of biological role, catalyzes the dehydration of trans-3-hydroxy-L-proline to delta-1-pyrroline-2-carboxylate (Pyr2C). The polypeptide is Trans-L-3-hydroxyproline dehydratase (l3hypdh) (Xenopus tropicalis (Western clawed frog)).